Here is a 328-residue protein sequence, read N- to C-terminus: 5'-AMP-activated protein kinase subunit gamma (328 aa).

CBS domains follow at residues 42–103 (VSYR…PDKF), 123–186 (IQPY…CKEI), 199–259 (ISTN…YNDL), and 268–328 (MRRS…FAES). ADP-binding positions include Ile-47, Arg-150, Arg-151, 171–174 (TQYR), 227–228 (SS), and 297–299 (RVH). Position 150 (Arg-150) interacts with AMP. ATP is bound at residue Arg-150. 227 to 228 (SS) contacts AMP. An ATP-binding site is contributed by 227 to 228 (SS). ATP contacts are provided by residues Arg-300 and 313 to 318 (VLTLSD). 315–318 (TLSD) is a binding site for ADP. 315–318 (TLSD) is an AMP binding site.

The protein belongs to the 5'-AMP-activated protein kinase gamma subunit family. AMPK is a heterotrimer of an alpha catalytic subunit, a beta and a gamma non-catalytic subunits.

Its subcellular location is the nucleus. It is found in the cytoplasm. Functionally, adenine nucleotides-binding subunit gamma of AMP-activated protein kinase (AMPK), an energy sensor protein kinase that plays a key role in regulating cellular energy metabolism. In response to reduction of intracellular ATP levels, AMPK activates energy-producing pathways and inhibits energy-consuming processes: inhibits protein, carbohydrate and lipid biosynthesis, as well as cell growth and proliferation. AMPK acts via direct phosphorylation of metabolic enzymes, and by longer-term effects via phosphorylation of transcription regulators. Gamma non-catalytic subunit mediates binding to AMP, ADP and ATP, leading to activate or inhibit AMPK: AMP-binding results in allosteric activation of alpha catalytic subunit (SNF1) both by inducing phosphorylation and preventing dephosphorylation of catalytic subunits. This Kluyveromyces lactis (strain ATCC 8585 / CBS 2359 / DSM 70799 / NBRC 1267 / NRRL Y-1140 / WM37) (Yeast) protein is 5'-AMP-activated protein kinase subunit gamma (SNF4).